A 462-amino-acid chain; its full sequence is ATP synthase subunit beta (462 aa).

150–157 is an ATP binding site; sequence GGAGVGKT.

This sequence belongs to the ATPase alpha/beta chains family. F-type ATPases have 2 components, CF(1) - the catalytic core - and CF(0) - the membrane proton channel. CF(1) has five subunits: alpha(3), beta(3), gamma(1), delta(1), epsilon(1). CF(0) has three main subunits: a(1), b(2) and c(9-12). The alpha and beta chains form an alternating ring which encloses part of the gamma chain. CF(1) is attached to CF(0) by a central stalk formed by the gamma and epsilon chains, while a peripheral stalk is formed by the delta and b chains.

Its subcellular location is the cell membrane. It carries out the reaction ATP + H2O + 4 H(+)(in) = ADP + phosphate + 5 H(+)(out). In terms of biological role, produces ATP from ADP in the presence of a proton gradient across the membrane. The catalytic sites are hosted primarily by the beta subunits. This is ATP synthase subunit beta from Wigglesworthia glossinidia brevipalpis.